The chain runs to 245 residues: LOB domain-containing protein 16 (245 aa).

In terms of domain architecture, LOB spans 14-116; the sequence is SPCGACKFLR…SQVMQMKAQI (103 aa). The disordered stretch occupies residues 162–183; the sequence is YYGHVNPNNPVSPQSSLEESFS.

It belongs to the LOB domain-containing protein family. In terms of assembly, homodimer and heterodimer with LBD18. As to expression, expressed in roots and faintly in shoots.

It localises to the nucleus. In terms of biological role, transcriptional activator. Involved in lateral root formation. Regulated by the transcriptional activators ARF7 and ARF19. Functions in the initiation and emergence of lateral roots, in conjunction with LBD18, downstream of ARF7 and ARF19. Acts downstream of the auxin influx carriers AUX1 and LAX1 in the regulation of lateral root initiation and development. This chain is LOB domain-containing protein 16 (LBD16), found in Arabidopsis thaliana (Mouse-ear cress).